A 129-amino-acid chain; its full sequence is Small ribosomal subunit protein eS6 (129 aa).

This sequence belongs to the eukaryotic ribosomal protein eS6 family.

The polypeptide is Small ribosomal subunit protein eS6 (Archaeoglobus fulgidus (strain ATCC 49558 / DSM 4304 / JCM 9628 / NBRC 100126 / VC-16)).